A 403-amino-acid polypeptide reads, in one-letter code: Dual-specificity RNA methyltransferase RlmN (403 aa).

Glu-126 acts as the Proton acceptor in catalysis. One can recognise a Radical SAM core domain in the interval 132–375 (ETDRGTLCVS…VRTPRGRDIL (244 aa)). A disulfide bridge links Cys-139 with Cys-378. [4Fe-4S] cluster contacts are provided by Cys-146, Cys-150, and Cys-153. Residues 204–205 (GE), Ser-236, 258–260 (SLH), and Asn-335 each bind S-adenosyl-L-methionine. Catalysis depends on Cys-378, which acts as the S-methylcysteine intermediate.

The protein belongs to the radical SAM superfamily. RlmN family. Requires [4Fe-4S] cluster as cofactor.

It localises to the cytoplasm. The catalysed reaction is adenosine(2503) in 23S rRNA + 2 reduced [2Fe-2S]-[ferredoxin] + 2 S-adenosyl-L-methionine = 2-methyladenosine(2503) in 23S rRNA + 5'-deoxyadenosine + L-methionine + 2 oxidized [2Fe-2S]-[ferredoxin] + S-adenosyl-L-homocysteine. The enzyme catalyses adenosine(37) in tRNA + 2 reduced [2Fe-2S]-[ferredoxin] + 2 S-adenosyl-L-methionine = 2-methyladenosine(37) in tRNA + 5'-deoxyadenosine + L-methionine + 2 oxidized [2Fe-2S]-[ferredoxin] + S-adenosyl-L-homocysteine. Functionally, specifically methylates position 2 of adenine 2503 in 23S rRNA and position 2 of adenine 37 in tRNAs. m2A2503 modification seems to play a crucial role in the proofreading step occurring at the peptidyl transferase center and thus would serve to optimize ribosomal fidelity. The chain is Dual-specificity RNA methyltransferase RlmN from Bradyrhizobium sp. (strain BTAi1 / ATCC BAA-1182).